The following is a 302-amino-acid chain: Sulfate adenylyltransferase subunit 2 (302 aa).

Belongs to the PAPS reductase family. CysD subfamily. Heterodimer composed of CysD, the smaller subunit, and CysN.

The catalysed reaction is sulfate + ATP + H(+) = adenosine 5'-phosphosulfate + diphosphate. Its pathway is sulfur metabolism; hydrogen sulfide biosynthesis; sulfite from sulfate: step 1/3. In terms of biological role, with CysN forms the ATP sulfurylase (ATPS) that catalyzes the adenylation of sulfate producing adenosine 5'-phosphosulfate (APS) and diphosphate, the first enzymatic step in sulfur assimilation pathway. APS synthesis involves the formation of a high-energy phosphoric-sulfuric acid anhydride bond driven by GTP hydrolysis by CysN coupled to ATP hydrolysis by CysD. The sequence is that of Sulfate adenylyltransferase subunit 2 from Erwinia tasmaniensis (strain DSM 17950 / CFBP 7177 / CIP 109463 / NCPPB 4357 / Et1/99).